Here is a 707-residue protein sequence, read N- to C-terminus: Protein MICRORCHIDIA 7 (707 aa).

Basic and acidic residues-rich tracts occupy residues 1–11 (MDNSIHVKREI) and 575–587 (DNRD…DREG). Disordered regions lie at residues 1–22 (MDNS…AGFP) and 568–619 (EKSA…SGKD). Residues 590-613 (SIKTPTPASDKFYSSSYPNHNGDN) show a composition bias toward polar residues. Positions 620-701 (GARLQEELRR…NKIKKMEGSK (82 aa)) form a coiled coil. Residues 633 to 640 (RRKALEVE) carry the Nuclear localization signal motif.

Belongs to the MORC ATPase protein family. In terms of assembly, homodimer and heterodimer. Component of an RNA-directed DNA methylation (RdDM) complex. Forms homomeric complexes. Mg(2+) serves as cofactor. The cofactor is Mn(2+).

The protein resides in the nucleus. Functionally, exhibits ATPase activity. Binds DNA/RNA in a non-specific manner and exhibits endonuclease activity. Probably involved in DNA repair. Involved in RNA-directed DNA methylation (RdDM) as a component of the RdDM machinery and required for gene silencing. May also be involved in the regulation of chromatin architecture to maintain gene silencing. Together with MORC4, acts to suppress a wide set of non-methylated protein-coding genes, especially involved in pathogen response. Positive regulators of defense against the oomycete Hyaloperonospora arabidopsidis (Hpa). The chain is Protein MICRORCHIDIA 7 from Arabidopsis thaliana (Mouse-ear cress).